A 370-amino-acid polypeptide reads, in one-letter code: 2-aminoethylphosphonate--pyruvate transaminase 2 (370 aa).

The residue at position 194 (Lys-194) is an N6-(pyridoxal phosphate)lysine.

The protein belongs to the class-V pyridoxal-phosphate-dependent aminotransferase family. PhnW subfamily. As to quaternary structure, homodimer. It depends on pyridoxal 5'-phosphate as a cofactor.

The enzyme catalyses (2-aminoethyl)phosphonate + pyruvate = phosphonoacetaldehyde + L-alanine. Functionally, involved in phosphonate degradation. In Paraburkholderia xenovorans (strain LB400), this protein is 2-aminoethylphosphonate--pyruvate transaminase 2.